A 237-amino-acid polypeptide reads, in one-letter code: Small ribosomal subunit protein uS2c (237 aa).

The protein belongs to the universal ribosomal protein uS2 family.

It localises to the plastid. This chain is Small ribosomal subunit protein uS2c (rps2), found in Epifagus virginiana (Beechdrops).